Here is a 492-residue protein sequence, read N- to C-terminus: Ribulose bisphosphate carboxylase large chain (492 aa).

Residues N131 and T181 each coordinate substrate. K183 functions as the Proton acceptor in the catalytic mechanism. Position 185 (K185) interacts with substrate. Positions 209, 211, and 212 each coordinate Mg(2+). Position 209 is an N6-carboxylysine (K209). H301 acts as the Proton acceptor in catalysis. The substrate site is built by R302, H334, and S386.

Belongs to the RuBisCO large chain family. Type I subfamily. In terms of assembly, heterohexadecamer of 8 large chains and 8 small chains. It depends on Mg(2+) as a cofactor.

The enzyme catalyses 2 (2R)-3-phosphoglycerate + 2 H(+) = D-ribulose 1,5-bisphosphate + CO2 + H2O. The catalysed reaction is D-ribulose 1,5-bisphosphate + O2 = 2-phosphoglycolate + (2R)-3-phosphoglycerate + 2 H(+). RuBisCO catalyzes two reactions: the carboxylation of D-ribulose 1,5-bisphosphate, the primary event in carbon dioxide fixation, as well as the oxidative fragmentation of the pentose substrate. Both reactions occur simultaneously and in competition at the same active site. The polypeptide is Ribulose bisphosphate carboxylase large chain (Nitrosococcus oceani (strain ATCC 19707 / BCRC 17464 / JCM 30415 / NCIMB 11848 / C-107)).